The sequence spans 405 residues: Glycosylated lysosomal membrane protein A (405 aa).

Residues 1-25 (MGCTRGWRLLLLLGLVCVGALQGRG) form the signal peptide. The Lumenal portion of the chain corresponds to 26 to 365 (QEESREVSLQ…YGEPPRDSFS (340 aa)). Residues N55, N86, N125, N129, N143, N153, N157, N164, N169, N179, N206, N222, N267, N304, and N331 are each glycosylated (N-linked (GlcNAc...) asparagine). Residues 366–386 (ILVICIMAVALGTPLLLLIVG) form a helical membrane-spanning segment. Over 387 to 405 (TLVVTALRHKVYSNYEPIN) the chain is Cytoplasmic. The Lysosomal targeting motif signature appears at 401–405 (YEPIN).

This sequence belongs to the GLMP family. Interacts (via lumenal domain) with lysosomal protein MFSD1; the interaction starts while both proteins are still in the endoplasmic reticulum and is required for stabilization of MFSD1 in lysosomes but has no direct effect on its targeting to lysosomes or transporter activity.

It is found in the lysosome membrane. Required to protect lysosomal transporter MFSD1 from lysosomal proteolysis and for MFSD1 lysosomal localization. This is Glycosylated lysosomal membrane protein A (glmp-a) from Xenopus laevis (African clawed frog).